The sequence spans 321 residues: Biotin synthase (321 aa).

Residues F45–R274 enclose the Radical SAM core domain. [4Fe-4S] cluster is bound by residues C63, C67, and C70. [2Fe-2S] cluster is bound by residues C139, C199, and R269.

This sequence belongs to the radical SAM superfamily. Biotin synthase family. As to quaternary structure, homodimer. Requires [4Fe-4S] cluster as cofactor. It depends on [2Fe-2S] cluster as a cofactor.

The enzyme catalyses (4R,5S)-dethiobiotin + (sulfur carrier)-SH + 2 reduced [2Fe-2S]-[ferredoxin] + 2 S-adenosyl-L-methionine = (sulfur carrier)-H + biotin + 2 5'-deoxyadenosine + 2 L-methionine + 2 oxidized [2Fe-2S]-[ferredoxin]. The protein operates within cofactor biosynthesis; biotin biosynthesis; biotin from 7,8-diaminononanoate: step 2/2. Its function is as follows. Catalyzes the conversion of dethiobiotin (DTB) to biotin by the insertion of a sulfur atom into dethiobiotin via a radical-based mechanism. The polypeptide is Biotin synthase (Pelotomaculum thermopropionicum (strain DSM 13744 / JCM 10971 / SI)).